The following is a 397-amino-acid chain: Acetyl-CoA acetyltransferase (397 aa).

Cys95 functions as the Acyl-thioester intermediate in the catalytic mechanism. Residues Tyr187 and Lys230 each coordinate CoA. Tyr187 is a K(+) binding site. K(+)-binding residues include Ala246, Gly247, and Ala249. Ser250 is a binding site for CoA. Val347 is a binding site for K(+). Active-site proton acceptor residues include His351 and Cys379.

This sequence belongs to the thiolase-like superfamily. Thiolase family.

The protein localises to the peroxisome. The enzyme catalyses 2 acetyl-CoA = acetoacetyl-CoA + CoA. In terms of biological role, essential for n-decane utilization. This chain is Acetyl-CoA acetyltransferase (PAT1), found in Yarrowia lipolytica (strain CLIB 122 / E 150) (Yeast).